Consider the following 315-residue polypeptide: 4-hydroxy-3-methylbut-2-enyl diphosphate reductase (315 aa).

Cys12 provides a ligand contact to [4Fe-4S] cluster. The (2E)-4-hydroxy-3-methylbut-2-enyl diphosphate site is built by His43 and His81. Dimethylallyl diphosphate contacts are provided by His43 and His81. Isopentenyl diphosphate contacts are provided by His43 and His81. Cys103 is a binding site for [4Fe-4S] cluster. His131 lines the (2E)-4-hydroxy-3-methylbut-2-enyl diphosphate pocket. His131 lines the dimethylallyl diphosphate pocket. His131 is an isopentenyl diphosphate binding site. Glu133 (proton donor) is an active-site residue. (2E)-4-hydroxy-3-methylbut-2-enyl diphosphate is bound at residue Thr170. Cys198 provides a ligand contact to [4Fe-4S] cluster. Residues Ser226, Asn228, and Ser271 each coordinate (2E)-4-hydroxy-3-methylbut-2-enyl diphosphate. Dimethylallyl diphosphate contacts are provided by Ser226, Asn228, and Ser271. Isopentenyl diphosphate is bound by residues Ser226, Asn228, and Ser271.

It belongs to the IspH family. [4Fe-4S] cluster serves as cofactor.

It catalyses the reaction isopentenyl diphosphate + 2 oxidized [2Fe-2S]-[ferredoxin] + H2O = (2E)-4-hydroxy-3-methylbut-2-enyl diphosphate + 2 reduced [2Fe-2S]-[ferredoxin] + 2 H(+). The catalysed reaction is dimethylallyl diphosphate + 2 oxidized [2Fe-2S]-[ferredoxin] + H2O = (2E)-4-hydroxy-3-methylbut-2-enyl diphosphate + 2 reduced [2Fe-2S]-[ferredoxin] + 2 H(+). It participates in isoprenoid biosynthesis; dimethylallyl diphosphate biosynthesis; dimethylallyl diphosphate from (2E)-4-hydroxy-3-methylbutenyl diphosphate: step 1/1. It functions in the pathway isoprenoid biosynthesis; isopentenyl diphosphate biosynthesis via DXP pathway; isopentenyl diphosphate from 1-deoxy-D-xylulose 5-phosphate: step 6/6. In terms of biological role, catalyzes the conversion of 1-hydroxy-2-methyl-2-(E)-butenyl 4-diphosphate (HMBPP) into a mixture of isopentenyl diphosphate (IPP) and dimethylallyl diphosphate (DMAPP). Acts in the terminal step of the DOXP/MEP pathway for isoprenoid precursor biosynthesis. The polypeptide is 4-hydroxy-3-methylbut-2-enyl diphosphate reductase (Bacillus cytotoxicus (strain DSM 22905 / CIP 110041 / 391-98 / NVH 391-98)).